The chain runs to 443 residues: F-box/LRR-repeat protein At2g42720 (443 aa).

Residues 1 to 47 enclose the F-box domain; sequence MDRISSLPDEILEHILSFLSTKEAALTSSLSTRWKNVFVFVPSLHLD. LRR repeat units follow at residues 139-167, 169-194, 201-236, 271-296, 323-348, and 363-389; these read KLRL…CLDT, DFDG…VLED, CGSV…ELSC, SSHL…HLTS, DKKQ…VFKG, and CSGI…SYQG.

The chain is F-box/LRR-repeat protein At2g42720 from Arabidopsis thaliana (Mouse-ear cress).